A 150-amino-acid polypeptide reads, in one-letter code: 3-hydroxyacyl-[acyl-carrier-protein] dehydratase FabZ (150 aa).

The active site involves H57.

It belongs to the thioester dehydratase family. FabZ subfamily.

The protein resides in the cytoplasm. It carries out the reaction a (3R)-hydroxyacyl-[ACP] = a (2E)-enoyl-[ACP] + H2O. Functionally, involved in unsaturated fatty acids biosynthesis. Catalyzes the dehydration of short chain beta-hydroxyacyl-ACPs and long chain saturated and unsaturated beta-hydroxyacyl-ACPs. In Actinobacillus succinogenes (strain ATCC 55618 / DSM 22257 / CCUG 43843 / 130Z), this protein is 3-hydroxyacyl-[acyl-carrier-protein] dehydratase FabZ.